The following is a 329-amino-acid chain: MGKLIDIPIVVESGQKYKTSQGVTAIKDGIKSSGQDHERLPKPKWLRIVNHTTPAYSQVKEQVQKHRLATVCEEAKCPNISECWSHGTATIMLMGAVCTRACRFCSVDTGNPHGWLDAEEPENTAETVALMNLDYVVLTSVNRDDLPDGGANHYAKTIRAIKKRSPRTKVEALTPDFQGSERDVAVLLDSGVDVFAQNVETVERLTHPVRDNRAGYQQTLNVLAFAKKYRPDVLTKTSLMLGLGETDEEIIRTMDDLRTHHVDILTLGQYLQPTKNHLPIARYVTPETFSELRQIGLKKGFFEVASGPLVRSSYRADRVFKRDNLGLDV.

Residues Cys-72, Cys-77, Cys-83, Cys-98, Cys-102, Cys-105, and Ser-313 each contribute to the [4Fe-4S] cluster site. In terms of domain architecture, Radical SAM core spans Cys-83–Glu-303.

It belongs to the radical SAM superfamily. Lipoyl synthase family. The cofactor is [4Fe-4S] cluster.

The protein localises to the cytoplasm. It catalyses the reaction [[Fe-S] cluster scaffold protein carrying a second [4Fe-4S](2+) cluster] + N(6)-octanoyl-L-lysyl-[protein] + 2 oxidized [2Fe-2S]-[ferredoxin] + 2 S-adenosyl-L-methionine + 4 H(+) = [[Fe-S] cluster scaffold protein] + N(6)-[(R)-dihydrolipoyl]-L-lysyl-[protein] + 4 Fe(3+) + 2 hydrogen sulfide + 2 5'-deoxyadenosine + 2 L-methionine + 2 reduced [2Fe-2S]-[ferredoxin]. It participates in protein modification; protein lipoylation via endogenous pathway; protein N(6)-(lipoyl)lysine from octanoyl-[acyl-carrier-protein]: step 2/2. Catalyzes the radical-mediated insertion of two sulfur atoms into the C-6 and C-8 positions of the octanoyl moiety bound to the lipoyl domains of lipoate-dependent enzymes, thereby converting the octanoylated domains into lipoylated derivatives. This is Lipoyl synthase from Legionella pneumophila (strain Corby).